The sequence spans 209 residues: Large ribosomal subunit protein uL3 (209 aa).

Positions 113–155 (TSRGHGYQGNIKRHHQSRGPETHGSRYHRIPGSMGSIINRVPK) are disordered.

It belongs to the universal ribosomal protein uL3 family. Part of the 50S ribosomal subunit. Forms a cluster with proteins L14 and L19.

One of the primary rRNA binding proteins, it binds directly near the 3'-end of the 23S rRNA, where it nucleates assembly of the 50S subunit. This chain is Large ribosomal subunit protein uL3, found in Lactobacillus delbrueckii subsp. bulgaricus (strain ATCC 11842 / DSM 20081 / BCRC 10696 / JCM 1002 / NBRC 13953 / NCIMB 11778 / NCTC 12712 / WDCM 00102 / Lb 14).